Reading from the N-terminus, the 270-residue chain is uncharacterized protein (270 aa).

Positions 1–22 (MGYIKRMALYMSVFLLIIFIVG) are cleaved as a signal peptide. Residue C23 is the site of N-palmitoyl cysteine attachment. C23 carries S-diacylglycerol cysteine lipidation.

The protein belongs to the staphylococcal tandem lipoprotein family.

Its subcellular location is the cell membrane. This is an uncharacterized protein from Staphylococcus aureus (strain COL).